A 729-amino-acid polypeptide reads, in one-letter code: MDAKTNDKSAGKCPFTSGRSHRIRDWWPGQLDVQVLHHNSNLSDPMDEDFDYAREFESLDLNAVIKDLTALMTDSQDWWPADFGHYGGLMIRLAWHSAGTYRITDGRGGAGAGQQRFAPLNSWPDNVLLDRGRRLLWPIKQKYGRKISWADLLVLSGNVALESMGFKTFGFAGGRADVWEPEELYWGPEGTWLGDERYSGERQLAEPLAAVQMGLIYVNPEGPNGKPDPIAAATDIRETFFRMAMNDEETVALIAGGHTFGKTHGAGDASLVGPAPESAPIEDQGLGWNSKFGTGKGGDSIGSGLEVTWTQTPTTWDNNFFDTLFKYEWELTKSPAGAYQWQAKDAPAITPDAHDTSKKHVPTMLTTDLSLRFDPAYGKISKHFHENPDQFADAFARAWYKLTHRDMGPRERYLGPLVPKETLIWQDPIPAVDHALVDDKDIAELKAKVLASGLTVPQLVSTAWASASTFRGSDKRGGANGARIRLAPQKDWEVNQPAQLKTVLARLEAIQSEFNGAQTGGKKVSLADLIVLAGCFAVEKAANDVGIDLKVPFTPGRMDASQDQTDVDSFAPLEPRADGFRNYIGSRHQFMTPEEALVDRAQLLNLTGPEMTVLVGGLRVLGANAADSRHGVFTKQPGTLTNDFFANLLTMDTVWQPVAGQDDVYEGRDRKTNAVQWTGTRVDLIFGSHSQLRAFAEVYACTDAKEKFARDFVAAWTKVMNADRFDLHR.

The tryptophyl-tyrosyl-methioninium (Trp-Tyr) (with M-243) cross-link spans 95–217 (WHSAGTYRIT…LAAVQMGLIY (123 aa)). Histidine 96 (proton acceptor) is an active-site residue. Residues 217-243 (YVNPEGPNGKPDPIAAATDIRETFFRM) constitute a cross-link (tryptophyl-tyrosyl-methioninium (Tyr-Met) (with W-95)). Histidine 258 is a binding site for heme b.

It belongs to the peroxidase family. Peroxidase/catalase subfamily. As to quaternary structure, homodimer or homotetramer. Heme b is required as a cofactor. Post-translationally, formation of the three residue Trp-Tyr-Met cross-link is important for the catalase, but not the peroxidase activity of the enzyme.

The enzyme catalyses H2O2 + AH2 = A + 2 H2O. The catalysed reaction is 2 H2O2 = O2 + 2 H2O. Functionally, bifunctional enzyme with both catalase and broad-spectrum peroxidase activity. This Nitrobacter hamburgensis (strain DSM 10229 / NCIMB 13809 / X14) protein is Catalase-peroxidase.